A 922-amino-acid polypeptide reads, in one-letter code: Protein translocase subunit SecA (922 aa).

ATP contacts are provided by residues Gln-87, Gly-105 to Thr-109, and Asp-519. The segment at His-850–Ala-891 is disordered. Over residues Gln-854 to Asn-865 the composition is skewed to polar residues. 4 residues coordinate Zn(2+): Cys-906, Cys-908, Cys-917, and Cys-918.

The protein belongs to the SecA family. Monomer and homodimer. Part of the essential Sec protein translocation apparatus which comprises SecA, SecYEG and auxiliary proteins SecDF. Other proteins may also be involved. Requires Zn(2+) as cofactor.

Its subcellular location is the cell inner membrane. It is found in the cytoplasm. It catalyses the reaction ATP + H2O + cellular proteinSide 1 = ADP + phosphate + cellular proteinSide 2.. Functionally, part of the Sec protein translocase complex. Interacts with the SecYEG preprotein conducting channel. Has a central role in coupling the hydrolysis of ATP to the transfer of proteins into and across the cell membrane, serving as an ATP-driven molecular motor driving the stepwise translocation of polypeptide chains across the membrane. This is Protein translocase subunit SecA from Treponema denticola (strain ATCC 35405 / DSM 14222 / CIP 103919 / JCM 8153 / KCTC 15104).